The sequence spans 394 residues: Elongation factor Tu (394 aa).

One can recognise a tr-type G domain in the interval 10–204; the sequence is KPHVNVGTIG…HLDTYIPEPE (195 aa). The interval 19-26 is G1; the sequence is GHVDHGKT. 19–26 serves as a coordination point for GTP; the sequence is GHVDHGKT. Mg(2+) is bound at residue Thr26. The G2 stretch occupies residues 60–64; sequence GITIN. Positions 81–84 are G3; it reads DCPG. GTP contacts are provided by residues 81–85 and 136–139; these read DCPGH and NKCD. The interval 136 to 139 is G4; that stretch reads NKCD. A G5 region spans residues 174–176; it reads SAL.

The protein belongs to the TRAFAC class translation factor GTPase superfamily. Classic translation factor GTPase family. EF-Tu/EF-1A subfamily. Monomer.

Its subcellular location is the cytoplasm. The enzyme catalyses GTP + H2O = GDP + phosphate + H(+). Functionally, GTP hydrolase that promotes the GTP-dependent binding of aminoacyl-tRNA to the A-site of ribosomes during protein biosynthesis. This is Elongation factor Tu from Klebsiella pneumoniae subsp. pneumoniae (strain ATCC 700721 / MGH 78578).